The chain runs to 210 residues: Redox-sensing transcriptional repressor Rex (210 aa).

The H-T-H motif DNA-binding region spans 16-55 (VYSRHLTDVDRKGIVTISSGDIAEGVGVSPAQVRKDLAYF). 90–95 (GMGNLG) lines the NAD(+) pocket.

The protein belongs to the transcriptional regulatory Rex family. Homodimer.

The protein resides in the cytoplasm. In terms of biological role, modulates transcription in response to changes in cellular NADH/NAD(+) redox state. This Desulfitobacterium hafniense (strain DSM 10664 / DCB-2) protein is Redox-sensing transcriptional repressor Rex.